A 203-amino-acid polypeptide reads, in one-letter code: Thymidylate kinase (203 aa).

10–17 (GIDGAGKS) is an ATP binding site.

Belongs to the thymidylate kinase family.

The enzyme catalyses dTMP + ATP = dTDP + ADP. Its function is as follows. Phosphorylation of dTMP to form dTDP in both de novo and salvage pathways of dTTP synthesis. In Cupriavidus pinatubonensis (strain JMP 134 / LMG 1197) (Cupriavidus necator (strain JMP 134)), this protein is Thymidylate kinase.